The following is a 335-amino-acid chain: MLFKEKIPGLILCFIIAIPSWLLGLYLPLIGAPVFAILIGIIVGSFYQNRQLFNKGIAFTSKYILQTAVVLLGFGLNLMQVMKVGISSLPIIIMTISISLIIAYVLQKLFKLDKTIATLIGVGSSICGGSAIAATAPVINAKDDEVAQAISVIFLFNILAALIFPTLGNFIGLSDHGFALFAGTAVNDTSSVTATATAWDAINHSNTLGGATIVKLTRTLAIIPITIVLSIYHMKQTQKEQSVSVTKIFPKFVLYFILASLLTTIVASLGFSLRIFEPLKVLSKFFIVMAMGAIGINTNVSKLIKTGGKSILLGAACWLGIIIVSLTMQAILGTW.

Helical transmembrane passes span 20 to 42 (SWLL…IGII), 57 to 79 (IAFT…LNLM), 84 to 106 (VGIS…AYVL), 116 to 138 (IATL…TAPV), 151 to 173 (SVIF…FIGL), 210 to 232 (GATI…LSIY), 253 to 275 (VLYF…SLRI), 285 to 304 (FFIV…SKLI), and 311 to 333 (ILLG…AILG).

Belongs to the UPF0324 family.

It is found in the cell membrane. This Streptococcus agalactiae serotype III (strain NEM316) protein is UPF0324 membrane protein gbs1193.